Reading from the N-terminus, the 250-residue chain is Dihydroorotate dehydrogenase B (NAD(+)), electron transfer subunit (250 aa).

Residues 1-94 enclose the FAD-binding FR-type domain; it reads MKVVAQEEIA…MGPQGNGFDL (94 aa). FAD contacts are provided by residues 45-48, 62-64, and 69-70; these read RPIS, IYR, and GT. 4 residues coordinate [2Fe-2S] cluster: Cys214, Cys219, Cys222, and Cys237.

This sequence belongs to the PyrK family. As to quaternary structure, heterotetramer of 2 PyrK and 2 PyrD type B subunits. Requires [2Fe-2S] cluster as cofactor. The cofactor is FAD.

It functions in the pathway pyrimidine metabolism; UMP biosynthesis via de novo pathway; orotate from (S)-dihydroorotate (NAD(+) route): step 1/1. In terms of biological role, responsible for channeling the electrons from the oxidation of dihydroorotate from the FMN redox center in the PyrD type B subunit to the ultimate electron acceptor NAD(+). In Streptococcus pneumoniae serotype 4 (strain ATCC BAA-334 / TIGR4), this protein is Dihydroorotate dehydrogenase B (NAD(+)), electron transfer subunit.